Consider the following 160-residue polypeptide: V-type proton ATPase subunit c (160 aa).

The Lumenal portion of the chain corresponds to 1–6 (MSDLCP). A helical transmembrane segment spans residues 7–27 (VYAPFFGSIGCAAAIVFTCFG). Over 28–53 (ASYGTAKSGVGICATSVTRPDLLVKN) the chain is Cytoplasmic. A helical transmembrane segment spans residues 54–74 (VVPVVMAGIIAIYGLVVSVLV). The Lumenal segment spans residues 75–90 (SDSLSQKQALYTGFIQ). The helical transmembrane segment at 91–111 (LGAGLSVGLSGLAAGFAIGIV) threads the bilayer. Residues 112 to 129 (GDAGVRGTAQQPRLFVGM) lie on the Cytoplasmic side of the membrane. The chain crosses the membrane as a helical span at residues 130–150 (ILILIFAEVLGLYGLIVALLL). The Lumenal segment spans residues 151–160 (NSRASQDVTC).

The protein belongs to the V-ATPase proteolipid subunit family. In terms of assembly, V-ATPase is a heteromultimeric enzyme composed of a peripheral catalytic V1 complex (components A to H) attached to an integral membrane V0 proton pore complex (components: a, c, c', c'', d, e, f and VOA1). The decameric c-ring forms the proton-conducting pore, and is composed of eight proteolipid subunits c, one subunit c' and one subunit c''.

It is found in the vacuole membrane. Proton-conducting pore forming subunit of the V0 complex of vacuolar(H+)-ATPase (V-ATPase), a multisubunit enzyme composed of a peripheral complex (V1) that hydrolyzes ATP and a membrane integral complex (V0) that translocates protons. V-ATPase is responsible for acidifying and maintaining the pH of intracellular compartments. The sequence is that of V-type proton ATPase subunit c (VMA3) from Candida tropicalis (Yeast).